Here is a 496-residue protein sequence, read N- to C-terminus: Glutamyl-tRNA(Gln) amidotransferase subunit B, organellar chromatophore (496 aa).

It belongs to the GatB/GatE family. GatB subfamily. In terms of assembly, subunit of the heterotrimeric GatCAB amidotransferase (AdT) complex, composed of A, B and C subunits.

The protein resides in the plastid. It is found in the organellar chromatophore. It catalyses the reaction L-glutamyl-tRNA(Gln) + L-glutamine + ATP + H2O = L-glutaminyl-tRNA(Gln) + L-glutamate + ADP + phosphate + H(+). Its function is as follows. Allows the formation of correctly charged Gln-tRNA(Gln) through the transamidation of misacylated Glu-tRNA(Gln). The reaction takes place in the presence of glutamine and ATP through an activated gamma-phospho-Glu-tRNA(Gln). This Paulinella chromatophora protein is Glutamyl-tRNA(Gln) amidotransferase subunit B, organellar chromatophore.